The primary structure comprises 221 residues: 7-cyano-7-deazaguanine synthase (221 aa).

10–20 is a binding site for ATP; the sequence is FSGGQDSTTCL. The Zn(2+) site is built by Cys-186, Cys-195, Cys-198, and Cys-201.

This sequence belongs to the QueC family. Homodimer. Zn(2+) serves as cofactor.

The catalysed reaction is 7-carboxy-7-deazaguanine + NH4(+) + ATP = 7-cyano-7-deazaguanine + ADP + phosphate + H2O + H(+). Its pathway is purine metabolism; 7-cyano-7-deazaguanine biosynthesis. Catalyzes the ATP-dependent conversion of 7-carboxy-7-deazaguanine (CDG) to 7-cyano-7-deazaguanine (preQ(0)). The polypeptide is 7-cyano-7-deazaguanine synthase (Geobacillus sp. (strain WCH70)).